The primary structure comprises 257 residues: Dihydroorotate dehydrogenase B (NAD(+)), electron transfer subunit (257 aa).

One can recognise an FAD-binding FR-type domain in the interval 2 to 102 (IGRERMTVVS…LGPLGHGFPL (101 aa)). FAD-binding positions include 53–56 (RPLS), 70–72 (IYR), and 77–78 (GT). 4 residues coordinate [2Fe-2S] cluster: Cys-221, Cys-226, Cys-229, and Cys-244.

This sequence belongs to the PyrK family. In terms of assembly, heterotetramer of 2 PyrK and 2 PyrD type B subunits. [2Fe-2S] cluster serves as cofactor. Requires FAD as cofactor.

It participates in pyrimidine metabolism; UMP biosynthesis via de novo pathway; orotate from (S)-dihydroorotate (NAD(+) route): step 1/1. Its function is as follows. Responsible for channeling the electrons from the oxidation of dihydroorotate from the FMN redox center in the PyrD type B subunit to the ultimate electron acceptor NAD(+). The sequence is that of Dihydroorotate dehydrogenase B (NAD(+)), electron transfer subunit from Geobacillus thermodenitrificans (strain NG80-2).